The chain runs to 283 residues: Para-Rep C10 (283 aa).

In terms of domain architecture, CRESS-DNA virus Rep endonuclease spans 3 to 96 (SIRAIHWCFT…IDGPWEYGTW (94 aa)). Residues 10–13 (CFTL) carry the RCR-1 motif. Residues E36 and H42 each contribute to the a divalent metal cation site. The RCR-2 signature appears at 42 to 44 (HLQ). Positions 51 to 71 (KQTTLKKMKELLPGAHLEMAR) match the Nuclear localization signal motif. Y79 (for DNA cleavage activity) is an active-site residue. The RCR-3 signature appears at 79-82 (YCQK). Residue E84 participates in a divalent metal cation binding. The short motif at 96–102 (WISTGSH) is the Nuclear localization signal element. Residue 172–180 (GPHGGEGKS) coordinates ATP.

This sequence belongs to the nanoviridea/circoviridae replication-associated protein family. In terms of assembly, homooligomer (Potential). Rep binds to repeated DNA motifs (iterons). The cofactor is Mg(2+). Requires Mn(2+) as cofactor.

The protein localises to the host nucleus. The enzyme catalyses ATP + H2O = ADP + phosphate + H(+). In terms of biological role, initiates and terminates the replication only of its own subviral DNA molecule. The closed circular ssDNA genome is first converted to a superhelical dsDNA. Rep binds a specific hairpin at the genome origin of replication. Introduces an endonucleolytic nick within the intergenic region of the genome, thereby initiating the rolling circle replication (RCR). Following cleavage, binds covalently to the 5'-phosphate of DNA as a tyrosyl ester. The cleavage gives rise to a free 3'-OH that serves as a primer for the cellular DNA polymerase. The polymerase synthesizes the (+) strand DNA by rolling circle mechanism. After one round of replication, a Rep-catalyzed nucleotidyl transfer reaction releases a circular single-stranded virus genome, thereby terminating the replication. Displays origin-specific DNA cleavage, nucleotidyl transferase, ATPase and helicase activities. This Milk vetch dwarf C10 alphasatellite (MVDC10A) protein is Para-Rep C10 (C10).